We begin with the raw amino-acid sequence, 132 residues long: Agouti-signaling protein (132 aa).

Residues 1 to 22 form the signal peptide; that stretch reads MDVTRLLLATLLVFLCFFTADS. N39 is a glycosylation site (N-linked (GlcNAc...) asparagine). Residues 62-85 are disordered; it reads ISRKEAEKKRSSKKEASMKTVARP. Residues 63 to 78 are compositionally biased toward basic and acidic residues; the sequence is SRKEAEKKRSSKKEAS. 5 cysteine pairs are disulfide-bonded: C93/C108, C100/C114, C107/C125, C111/C132, and C116/C123. The Agouti domain maps to 93–132; that stretch reads CVATRNSCKPPAPACCDPCASCQCRFFRSACSCRVLSLNC.

The protein localises to the secreted. Involved in the regulation of melanogenesis. The binding of ASP to MC1R precludes alpha-MSH initiated signaling and thus blocks production of cAMP, leading to a down-regulation of eumelanogenesis (brown/black pigment) and thus increasing synthesis of pheomelanin (yellow/red pigment). The polypeptide is Agouti-signaling protein (ASIP) (Pongo pygmaeus (Bornean orangutan)).